A 633-amino-acid polypeptide reads, in one-letter code: Glutathione S-transferase C-terminal domain-containing protein (633 aa).

In terms of domain architecture, GST C-terminal spans 130–332 (LGFKKTCLKA…QEVPGVKTAA (203 aa)). The interval 191 to 233 (NDDKLRRQKLKQQKADGVGPPLTKGKAKSKVHTQETSEGLDSS) is disordered. The segment covering 224–233 (QETSEGLDSS) has biased composition (polar residues). Ser233 is modified (phosphoserine).

This sequence belongs to the GSTCD family. In terms of tissue distribution, widely expressed in cell types relevant to airway function, including airway smooth muscle cells and epithelial cells.

The protein resides in the cytoplasm. The chain is Glutathione S-transferase C-terminal domain-containing protein (GSTCD) from Homo sapiens (Human).